The following is a 164-amino-acid chain: Endoribonuclease YbeY (164 aa).

Positions 132, 136, and 142 each coordinate Zn(2+).

This sequence belongs to the endoribonuclease YbeY family. It depends on Zn(2+) as a cofactor.

Its subcellular location is the cytoplasm. Functionally, single strand-specific metallo-endoribonuclease involved in late-stage 70S ribosome quality control and in maturation of the 3' terminus of the 16S rRNA. This is Endoribonuclease YbeY from Clostridium kluyveri (strain NBRC 12016).